Here is a 615-residue protein sequence, read N- to C-terminus: tRNA uridine 5-carboxymethylaminomethyl modification enzyme MnmG (615 aa).

11–16 (GLGHAG) contacts FAD. 278 to 292 (GPRYCPSLEDKVVRF) is an NAD(+) binding site.

Belongs to the MnmG family. As to quaternary structure, homodimer. Heterotetramer of two MnmE and two MnmG subunits. FAD serves as cofactor.

The protein resides in the cytoplasm. In terms of biological role, NAD-binding protein involved in the addition of a carboxymethylaminomethyl (cmnm) group at the wobble position (U34) of certain tRNAs, forming tRNA-cmnm(5)s(2)U34. This is tRNA uridine 5-carboxymethylaminomethyl modification enzyme MnmG from Myxococcus xanthus (strain DK1622).